The chain runs to 321 residues: Nucleus-vacuole junction protein 1 (321 aa).

The first 22 residues, 1 to 22, serve as a signal peptide directing secretion; sequence MTRPPLVRGIFSLGLSVAVLKG. Residues 73–125 are TSC13-binding; that stretch reads ELSWRKVFNFISRQSSELDTRIYVLILLLSFLLPIAWTVLDGDRETTLEDKDN. A helical transmembrane segment spans residues 94-114; sequence IYVLILLLSFLLPIAWTVLDG. The segment at 139-195 is OSH1-binding; sequence KHYNDGERAVLQFGKNRSEPIILSYKDMNVLEGEHEFTSKEEHSNSHLTSKSENALN. 2 positions are modified to phosphoserine: Ser156 and Ser199. A disordered region spans residues 211–275; that stretch reads LEEDKNEPNG…SLKSSTSFPI (65 aa). The segment at 233–321 is VAC8-binding; that stretch reads DCSSSSEVES…EQAYSQPFRY (89 aa). A compositionally biased stretch (basic and acidic residues) spans 242-262; sequence SQSKCRKESTAEPDSLSRDTR. Positions 263 to 272 are enriched in low complexity; that stretch reads TTSSLKSSTS. Phosphoserine occurs at positions 285 and 298. The disordered stretch occupies residues 299 to 321; that stretch reads PTKSSNLDAQVNTEQAYSQPFRY.

In terms of assembly, interacts with OSH1, TSC13 and VAC8.

Its subcellular location is the nucleus outer membrane. Involved in the formation of nucleus-vacuole junctions (NVJs) during piecemeal microautophagy of the nucleus (PMN). NVJs are interorganelle interfaces mediated by NVJ1 in the nuclear envelope and VAC8 on the vacuole membrane. Together, NVJ1 and VAC8 form Velcro-like patches through which teardrop-like portions of the nucleus are pinched off into the vacuolar lumen and degraded by the PMN process. Also acts as an outer-nuclear membrane receptor for OSH1 and TSC13. The protein is Nucleus-vacuole junction protein 1 (NVJ1) of Saccharomyces cerevisiae (strain ATCC 204508 / S288c) (Baker's yeast).